A 452-amino-acid polypeptide reads, in one-letter code: Digeranylgeranylglycerophospholipid reductase (452 aa).

FAD is bound by residues 15–16, 35–36, and 45–50; these read FA, DS, and KPCGDA. Histidine 55 contributes to the a 2,3-bis-O-phytanyl-sn-glycerol 1-phospholipid binding site. Positions 122 and 288 each coordinate FAD. Histidine 297 lines the a 2,3-bis-O-phytanyl-sn-glycerol 1-phospholipid pocket. Residue 300 to 301 participates in FAD binding; sequence GK. Cysteine 310 and cysteine 335 form a disulfide bridge. Tyrosine 340 lines the a 2,3-bis-O-phytanyl-sn-glycerol 1-phospholipid pocket.

The protein belongs to the geranylgeranyl reductase family. As to quaternary structure, monomer. The cofactor is FAD.

It carries out the reaction a 2,3-bis-O-phytanyl-sn-glycerol 1-phospholipid + 8 A = a 2,3-bis-O-(geranylgeranyl)-sn-glycerol 1-phospholipid + 8 AH2. The enzyme catalyses 2,3-bis-O-(phytanyl)-sn-glycerol 1-phosphate + 8 A = 2,3-bis-O-(geranylgeranyl)-sn-glycerol 1-phosphate + 8 AH2. It catalyses the reaction sn-3-O-phytanylglycerol 1-phosphate + 4 A = sn-3-O-(geranylgeranyl)glycerol 1-phosphate + 4 AH2. The catalysed reaction is phytyl diphosphate + 3 A = (2E,6E,10E)-geranylgeranyl diphosphate + 3 AH2. The protein operates within membrane lipid metabolism; glycerophospholipid metabolism. In terms of biological role, is involved in the reduction of 2,3-digeranylgeranylglycerophospholipids (unsaturated archaeols) into 2,3-diphytanylglycerophospholipids (saturated archaeols) in the biosynthesis of archaeal membrane lipids. Catalyzes the formation of archaetidic acid (2,3-di-O-phytanyl-sn-glyceryl phosphate) from 2,3-di-O-geranylgeranylglyceryl phosphate (DGGGP) via the hydrogenation of each double bond of the isoprenoid chains. Is not active with NADPH or NADH as an electron donor; the physiological reducing agent is unknown. Is also active on the more upstream precursors of membrane lipid biosynthesis, catalyzing the complete reduction of 3-O-geranylgeranylglyceryl phosphate (GGGP) to 3-O-phytanylglyceryl phosphate, and the partial reduction of geranylgeranyl diphosphate (GGPP) to phytyl diphosphate, thus reducing three of four GGPP double bonds and preserving the allylic double bond (at position 2). This reaction product is a reactive prenyl donor, which can be used as a substrate by archaeal prenyltransferases such as GGGP synthases. The sequence is that of Digeranylgeranylglycerophospholipid reductase from Sulfolobus acidocaldarius (strain ATCC 33909 / DSM 639 / JCM 8929 / NBRC 15157 / NCIMB 11770).